The following is a 292-amino-acid chain: UPF0749 protein Mb1856 (292 aa).

A signal peptide spans 1–28 (MSENRPEPVAAETSAATTARHSQADAGA). A disordered region spans residues 1–30 (MSENRPEPVAAETSAATTARHSQADAGAHD). 3 helical membrane-spanning segments follow: residues 68 to 88 (VFGT…VTQV), 152 to 172 (AALS…MITI), and 229 to 249 (VLSP…AAAM).

This sequence belongs to the UPF0749 family.

The protein localises to the cell membrane. This chain is UPF0749 protein Mb1856, found in Mycobacterium bovis (strain ATCC BAA-935 / AF2122/97).